A 331-amino-acid chain; its full sequence is Cytosolic 5'-nucleotidase 3A (331 aa).

Asp-83 acts as the Nucleophile in catalysis. Mg(2+)-binding residues include Asp-83 and Asp-85. Catalysis depends on Asp-85, which acts as the Proton donor. CMP is bound at residue Glu-130. Positions 130 and 151 each coordinate N(7)-methyl-GMP. Substrate is bound by residues 198–200 (SAG) and Lys-247. Asp-272 provides a ligand contact to Mg(2+). Ser-273 carries the phosphoserine modification.

It belongs to the pyrimidine 5'-nucleotidase family. Monomer. In terms of tissue distribution, isoform 2 is highly expressed in the brain, heart, spleen, kidney and blood. Isoform 2 is expressed (at protein level) in the spleen, skeletal muscle and gastrointestinal epithelia.

It localises to the cytoplasm. It carries out the reaction N(7)-methyl-GMP + H2O = N(7)-methylguanosine + phosphate. The enzyme catalyses a ribonucleoside 5'-phosphate + H2O = a ribonucleoside + phosphate. Its function is as follows. Nucleotidase which shows specific activity towards cytidine monophosphate (CMP) and 7-methylguanosine monophosphate (m(7)GMP). CMP seems to be the preferred substrate. In Mus musculus (Mouse), this protein is Cytosolic 5'-nucleotidase 3A (Nt5c3a).